Here is a 435-residue protein sequence, read N- to C-terminus: Tol-Pal system protein TolB (435 aa).

Residues Met-1–Ala-24 form the signal peptide.

Belongs to the TolB family. The Tol-Pal system is composed of five core proteins: the inner membrane proteins TolA, TolQ and TolR, the periplasmic protein TolB and the outer membrane protein Pal. They form a network linking the inner and outer membranes and the peptidoglycan layer.

It localises to the periplasm. Its function is as follows. Part of the Tol-Pal system, which plays a role in outer membrane invagination during cell division and is important for maintaining outer membrane integrity. This Thioalkalivibrio sulfidiphilus (strain HL-EbGR7) protein is Tol-Pal system protein TolB.